A 276-amino-acid chain; its full sequence is Malonyl-[acyl-carrier protein] O-methyltransferase (276 aa).

The protein belongs to the methyltransferase superfamily.

The enzyme catalyses malonyl-[ACP] + S-adenosyl-L-methionine = malonyl-[ACP] methyl ester + S-adenosyl-L-homocysteine. The protein operates within cofactor biosynthesis; biotin biosynthesis. Its function is as follows. Converts the free carboxyl group of a malonyl-thioester to its methyl ester by transfer of a methyl group from S-adenosyl-L-methionine (SAM). It allows to synthesize pimeloyl-ACP via the fatty acid synthetic pathway. The chain is Malonyl-[acyl-carrier protein] O-methyltransferase from Paenibacillus sp. (strain JDR-2).